The sequence spans 425 residues: UPF0597 protein VF_0641 (425 aa).

This sequence belongs to the UPF0597 family.

The protein is UPF0597 protein VF_0641 of Aliivibrio fischeri (strain ATCC 700601 / ES114) (Vibrio fischeri).